A 394-amino-acid chain; its full sequence is Elongation factor Tu (394 aa).

Positions 10–204 constitute a tr-type G domain; the sequence is KPHVNVGTIG…ALDRYIPTPE (195 aa). The tract at residues 19–26 is G1; that stretch reads GHVDHGKT. 19 to 26 is a GTP binding site; it reads GHVDHGKT. Residue T26 coordinates Mg(2+). Residues 60 to 64 form a G2 region; that stretch reads GITIN. The G3 stretch occupies residues 81-84; it reads DCPG. GTP is bound by residues 81–85 and 136–139; these read DCPGH and NKCD. Residues 136 to 139 are G4; the sequence is NKCD. Positions 174–176 are G5; the sequence is SAL.

Belongs to the TRAFAC class translation factor GTPase superfamily. Classic translation factor GTPase family. EF-Tu/EF-1A subfamily. As to quaternary structure, monomer.

It localises to the cytoplasm. It carries out the reaction GTP + H2O = GDP + phosphate + H(+). Functionally, GTP hydrolase that promotes the GTP-dependent binding of aminoacyl-tRNA to the A-site of ribosomes during protein biosynthesis. The chain is Elongation factor Tu from Neisseria gonorrhoeae.